Consider the following 445-residue polypeptide: GTPase Der (445 aa).

2 EngA-type G domains span residues 3–167 (PVIA…YAGQ) and 180–353 (VKIA…AAAM). Residues 9–16 (GRPNVGKS), 56–60 (DTGGF), 119–122 (NKAE), 186–193 (GRPNVGKS), 233–237 (DTAGL), and 298–301 (NKWD) contribute to the GTP site. Positions 354-438 (AKLPTPKLTR…PLRIEFRSST (85 aa)) constitute a KH-like domain.

This sequence belongs to the TRAFAC class TrmE-Era-EngA-EngB-Septin-like GTPase superfamily. EngA (Der) GTPase family. In terms of assembly, associates with the 50S ribosomal subunit.

GTPase that plays an essential role in the late steps of ribosome biogenesis. The chain is GTPase Der from Paraburkholderia phytofirmans (strain DSM 17436 / LMG 22146 / PsJN) (Burkholderia phytofirmans).